The primary structure comprises 141 residues: Translation initiation factor IF-1, chloroplastic (141 aa).

The transit peptide at 1-46 (MLQLCSTFRPQLLLPCQFRFTNGVLIPQINYVASNSVVNIRPMIRC) directs the protein to the chloroplast. The tract at residues 49 to 69 (ASGGRGGANRSKPAKPQVKEG) is disordered. The S1-like domain occupies 63–138 (KPQVKEGSNK…TKGRIIFRMS (76 aa)).

It belongs to the IF-1 family. Component of the 30S ribosomal translation pre-initiation complex which assembles on the 30S ribosome in the order IF-2 and IF-3, IF-1 and N-formylmethionyl-tRNA(fMet); mRNA recruitment can occur at any time during PIC assembly.

It localises to the plastid. The protein localises to the chloroplast. Its function is as follows. One of the essential components for the initiation of protein synthesis. Stabilizes the binding of IF-2 and IF-3 on the 30S subunit to which N-formylmethionyl-tRNA(fMet) subsequently binds. Helps modulate mRNA selection, yielding the 30S pre-initiation complex (PIC). Upon addition of the 50S ribosomal subunit IF-1, IF-2 and IF-3 are released leaving the mature 70S translation initiation complex. This is Translation initiation factor IF-1, chloroplastic from Arabidopsis thaliana (Mouse-ear cress).